The sequence spans 505 residues: Kelch-like protein 42 (505 aa).

One can recognise a BTB domain in the interval 5 to 78; the sequence is EMVQIRLEDR…INAGGAREGW (74 aa). Ser43 is subject to Phosphoserine. Kelch repeat units lie at residues 176-234, 235-282, 284-325, 327-372, 374-429, and 431-480; these read PGDV…PLAN, NLPP…NEWL, VASM…DAWN, VAPL…DMWT, FETC…RQWL, and LKEN…DSWE.

In terms of assembly, component of the BCR(KLHL42) E3 ubiquitin ligase complex, at least composed of CUL3 and KLHL42. Interacts (via the BTB domain) with CUL3. Interacts (via the kelch domains) with KATNA1.

Its subcellular location is the cytoplasm. It localises to the cytoskeleton. The protein resides in the spindle. The protein operates within protein modification; protein ubiquitination. Substrate-specific adapter of a BCR (BTB-CUL3-RBX1) E3 ubiquitin-protein ligase complex required for mitotic progression and cytokinesis. The BCR(KLHL42) E3 ubiquitin ligase complex mediates the ubiquitination and subsequent degradation of KATNA1. Involved in microtubule dynamics throughout mitosis. The sequence is that of Kelch-like protein 42 (KLHL42) from Homo sapiens (Human).